We begin with the raw amino-acid sequence, 442 residues long: Putative nucleotide-sugar transporter YMD8 (442 aa).

Residues Met-1–Arg-3 are Cytoplasmic-facing. The chain crosses the membrane as a helical span at residues Thr-4 to Asn-24. Topologically, residues Arg-25–Asp-32 are extracellular. A helical transmembrane segment spans residues Gly-33–Leu-53. The Cytoplasmic portion of the chain corresponds to Ser-54 to Asn-76. Residues Trp-77–Leu-97 traverse the membrane as a helical segment. The Extracellular segment spans residues Ser-98–Leu-107. The N-linked (GlcNAc...) asparagine glycan is linked to Asn-99. The chain crosses the membrane as a helical span at residues Thr-108 to Phe-128. At Lys-129 to Lys-132 the chain is on the cytoplasmic side. Residues Phe-133–Phe-153 form a helical membrane-spanning segment. The Extracellular portion of the chain corresponds to Lys-154–Ala-166. A helical transmembrane segment spans residues Leu-167 to Val-187. Residues Tyr-188–Pro-254 are Cytoplasmic-facing. Residue Ser-209 is modified to Phosphoserine. The helical transmembrane segment at Ile-255–Phe-275 threads the bilayer. Residues Ser-276–Gly-301 lie on the Extracellular side of the membrane. A helical membrane pass occupies residues Ile-302–Ile-322. The Cytoplasmic segment spans residues Leu-323 to Leu-329. The helical transmembrane segment at Thr-330–Leu-350 threads the bilayer. The Extracellular portion of the chain corresponds to Ser-351 to Ser-355. Residues Gly-356–Phe-376 traverse the membrane as a helical segment. The Cytoplasmic portion of the chain corresponds to Arg-377–Val-442.

It belongs to the TPT transporter family. SLC35C subfamily.

It is found in the golgi apparatus membrane. The protein localises to the cytoplasmic vesicle. It localises to the COPI-coated vesicle membrane. The chain is Putative nucleotide-sugar transporter YMD8 (YMD8) from Saccharomyces cerevisiae (strain ATCC 204508 / S288c) (Baker's yeast).